We begin with the raw amino-acid sequence, 398 residues long: Phosphoglycerate kinase (398 aa).

Substrate is bound by residues 22 to 24, R38, 61 to 64, R120, and R153; these read DFN and HLGR. ATP is bound by residues K204, E326, and 352 to 355; that span reads GGDT.

This sequence belongs to the phosphoglycerate kinase family. In terms of assembly, monomer.

The protein resides in the cytoplasm. It carries out the reaction (2R)-3-phosphoglycerate + ATP = (2R)-3-phospho-glyceroyl phosphate + ADP. It functions in the pathway carbohydrate degradation; glycolysis; pyruvate from D-glyceraldehyde 3-phosphate: step 2/5. This Geobacter metallireducens (strain ATCC 53774 / DSM 7210 / GS-15) protein is Phosphoglycerate kinase.